A 285-amino-acid chain; its full sequence is GTP-binding protein 8 (285 aa).

An EngB-type G domain is found at 110–283 (QQPEVCFIGR…KCFIADITGS (174 aa)). Residues 118 to 125 (GRSNVGKS), 147 to 151 (GHTKK), 165 to 168 (DMPG), 227 to 230 (TKID), and 262 to 264 (ISA) each bind GTP. Positions 125 and 149 each coordinate Mg(2+).

Belongs to the TRAFAC class TrmE-Era-EngA-EngB-Septin-like GTPase superfamily. EngB GTPase family. Mg(2+) is required as a cofactor.

In Mus musculus (Mouse), this protein is GTP-binding protein 8 (Gtpbp8).